A 544-amino-acid polypeptide reads, in one-letter code: MFS-type transporter prx5 (544 aa).

A disordered region spans residues 1-28 (MAVDTEKDSVQAGSPMETPGSPVDETTE). Helical transmembrane passes span 36-56 (WIVSMILSCGYGLSFWPIPVV), 90-110 (LDHLCFLDLVCFIGHIVVASA), 116-136 (VIAGLVVSGFGGANCQMAAFA), 148-168 (IGVVIADLTVYIAVIIAPVTA), 178-198 (AWNFWGVAIFQGLSFFGLLFL), 221-241 (GAFLFIGGAVPFLMGIVWAGV), 249-269 (VVAPLVVGAAVLVCFALWESF), 290-310 (FTAPVIALGVVNMFYYSSSIL), 330-350 (VILSLPQGFAIFFGAMLLTCF), 361-381 (LTGSVFVMVVFGSLLGIVTPT), 387-407 (IAFIFLSQAGFGWALYLSIAI), 418-438 (GVSGGISGCIRFAAGAVATSI), and 505-525 (AIFVVAMVSMAFGILGLAACL).

Belongs to the major facilitator superfamily.

It is found in the cell membrane. Its function is as follows. MFS-type transporter; part of the gene cluster that mediates the biosynthesis of PR-toxin, a bicyclic sesquiterpene belonging to the eremophilane class and acting as a mycotoxin. The protein is MFS-type transporter prx5 of Penicillium rubens (strain ATCC 28089 / DSM 1075 / NRRL 1951 / Wisconsin 54-1255) (Penicillium chrysogenum).